We begin with the raw amino-acid sequence, 459 residues long: MPAPSTTLLIEGSFSELAEEFAAYLDALNKPDDTTVQTEVAPLLQPLREQEQNDTQLDQSKRDEVLKKLVSAATVLNTAPEKEITPAYNLLIHLVQQASDPDMFLSRICSYLAKPIPSSPQFGASLSIAILSTIFNTLAPTDSSRFHVLLAIVTVIRQSGSSAAFDALKPQLTAQLPNWRSTWELDDEEARRLHLAIADAAQAAGDLDWAQTHVVDALQTIPPAEASSPAARDLAVRALTSALTHPAVFDFTPLTAADAVQALRSSDAPLFELLEIFTADTLDAYEDFISATPVENILPDNALAPHAEALQTKIRLLTLASLAAAATTTTGPSARSLSYETIASALRVPQEEVEKWVIDTIRAGLVEGKLSQLRSEFLVHRATYRVFGEKQWAEVQGRLMVWRRSLENVLGVIRSERERFVREAAAAAAAAAAEGEKGDKNNKGPSERRRAPQEIAAAE.

The PCI domain maps to 207-384 (LDWAQTHVVD…SEFLVHRATY (178 aa)). The segment at 431 to 459 (AAAEGEKGDKNNKGPSERRRAPQEIAAAE) is disordered. The span at 434–452 (EGEKGDKNNKGPSERRRAP) shows a compositional bias: basic and acidic residues.

The protein belongs to the eIF-3 subunit M family. As to quaternary structure, component of the eukaryotic translation initiation factor 3 (eIF-3) complex.

It localises to the cytoplasm. In terms of biological role, component of the eukaryotic translation initiation factor 3 (eIF-3) complex, which is involved in protein synthesis of a specialized repertoire of mRNAs and, together with other initiation factors, stimulates binding of mRNA and methionyl-tRNAi to the 40S ribosome. The eIF-3 complex specifically targets and initiates translation of a subset of mRNAs involved in cell proliferation. The polypeptide is Eukaryotic translation initiation factor 3 subunit M (Emericella nidulans (strain FGSC A4 / ATCC 38163 / CBS 112.46 / NRRL 194 / M139) (Aspergillus nidulans)).